The chain runs to 125 residues: MTDRESSRDKGRQAEELACAHLRRQGLATLGKNWTCRRGELDLVMLDGDTVVFVEVRSRRHRAWGGALESIDARKRQRLILSAELFLQQEARWAKRPCRFDVVTVDTSDGQSPPRLDWIQNAFDA.

The protein belongs to the UPF0102 family.

The sequence is that of UPF0102 protein PA4424 from Pseudomonas aeruginosa (strain ATCC 15692 / DSM 22644 / CIP 104116 / JCM 14847 / LMG 12228 / 1C / PRS 101 / PAO1).